Reading from the N-terminus, the 143-residue chain is MSLSSKDKATVKEFFGKMSTRSDDIGAEALSRLVAVYPQTKSYFSHWKDASPGSAPVRKHGITIMGGVYDAVTKIDDLKGGLLSLSELHAFMLRVDPVNFKLLAHCMLVCMSMVFPEEFTPQVHVAVDKFLAQLALALAEKYR.

S2 bears the N-acetylserine mark. Positions S2 to R143 constitute a Globin domain. H60 is an O2 binding site. H89 contacts heme b.

The protein belongs to the globin family. As to quaternary structure, hb 1 is a heterotetramer of two alpha-1 and two beta-1 chains. As to expression, red blood cells.

Its function is as follows. Involved in oxygen transport from gills to the various peripheral tissues. The chain is Hemoglobin subunit alpha-1 (hba1) from Arctogadus glacialis (Arctic cod).